A 198-amino-acid polypeptide reads, in one-letter code: Phycocyanobilin lyase CpcT homolog (198 aa).

This sequence belongs to the CpcT/CpeT biliprotein lyase family.

Functionally, covalently attaches a chromophore to Cys residue(s) of phycobiliproteins. In vitro is not seen to act as a chromophore lyase for ApcA1, ApcA2, ApcB, ApcD, ApcF, CpcB or PecB, the lyase activity is therefore unsure. In Nostoc sp. (strain PCC 7120 / SAG 25.82 / UTEX 2576), this protein is Phycocyanobilin lyase CpcT homolog (cpcT2).